Reading from the N-terminus, the 304-residue chain is Porphobilinogen deaminase (304 aa).

An S-(dipyrrolylmethanemethyl)cysteine modification is found at Cys240.

The protein belongs to the HMBS family. In terms of assembly, monomer. It depends on dipyrromethane as a cofactor.

The catalysed reaction is 4 porphobilinogen + H2O = hydroxymethylbilane + 4 NH4(+). Its pathway is porphyrin-containing compound metabolism; protoporphyrin-IX biosynthesis; coproporphyrinogen-III from 5-aminolevulinate: step 2/4. In terms of biological role, tetrapolymerization of the monopyrrole PBG into the hydroxymethylbilane pre-uroporphyrinogen in several discrete steps. The polypeptide is Porphobilinogen deaminase (Xanthomonas campestris pv. campestris (strain ATCC 33913 / DSM 3586 / NCPPB 528 / LMG 568 / P 25)).